Consider the following 121-residue polypeptide: Large ribosomal subunit protein uL18 (121 aa).

This sequence belongs to the universal ribosomal protein uL18 family. Part of the 50S ribosomal subunit; part of the 5S rRNA/L5/L18/L25 subcomplex. Contacts the 5S and 23S rRNAs.

In terms of biological role, this is one of the proteins that bind and probably mediate the attachment of the 5S RNA into the large ribosomal subunit, where it forms part of the central protuberance. The sequence is that of Large ribosomal subunit protein uL18 from Polaromonas sp. (strain JS666 / ATCC BAA-500).